The primary structure comprises 368 residues: Membrane glycoprotein UL18 (368 aa).

The first 19 residues, 1-19, serve as a signal peptide directing secretion; that stretch reads MMTMWCLTLFVLWMLRVVG. Residues 326–346 form a helical membrane-spanning segment; it reads ISSVLLALLLCALLFAFLHYF.

In terms of assembly, interacts with host LILRB1.

The protein resides in the host membrane. Functionally, plays a role in the protection against host NK cell cytotoxicity by interacting with and modulating the activity of the host inhibitory leukocyte Ig-like receptor 1/LILRB1, which is expressed on monocytes, dendritic cells, as well as subsets of T and NK cells. UL18 exerts an inhibitory effect on LIR-1+ NK cells, while it stimulates LIR-1- NK cell. The polypeptide is Membrane glycoprotein UL18 (UL18) (Homo sapiens (Human)).